A 481-amino-acid polypeptide reads, in one-letter code: F-box/LRR-repeat protein At3g03360 (481 aa).

The disordered stretch occupies residues 1–28 (MEKESQENSTRPDASSTVFSSSKSTCAS). The segment covering 14-28 (ASSTVFSSSKSTCAS) has biased composition (low complexity). An F-box domain is found at 36–84 (GDLISRLPDDILQLILSYLPTRLAIKTSVLSRRWRHVWSDTWSLSFHRD). LRR repeat units lie at residues 118-145 (SRPD…SLYL), 196-221 (HCNI…LLFF), 295-320 (EADF…TLGA), 350-375 (ISRY…TIHP), and 413-439 (RRNV…ELIV).

This chain is F-box/LRR-repeat protein At3g03360, found in Arabidopsis thaliana (Mouse-ear cress).